Reading from the N-terminus, the 307-residue chain is UDP-3-O-acyl-N-acetylglucosamine deacetylase (307 aa).

Positions 78, 235, and 239 each coordinate Zn(2+). H262 functions as the Proton donor in the catalytic mechanism.

The protein belongs to the LpxC family. Zn(2+) serves as cofactor.

The enzyme catalyses a UDP-3-O-[(3R)-3-hydroxyacyl]-N-acetyl-alpha-D-glucosamine + H2O = a UDP-3-O-[(3R)-3-hydroxyacyl]-alpha-D-glucosamine + acetate. The protein operates within glycolipid biosynthesis; lipid IV(A) biosynthesis; lipid IV(A) from (3R)-3-hydroxytetradecanoyl-[acyl-carrier-protein] and UDP-N-acetyl-alpha-D-glucosamine: step 2/6. In terms of biological role, catalyzes the hydrolysis of UDP-3-O-myristoyl-N-acetylglucosamine to form UDP-3-O-myristoylglucosamine and acetate, the committed step in lipid A biosynthesis. The polypeptide is UDP-3-O-acyl-N-acetylglucosamine deacetylase (Geotalea uraniireducens (strain Rf4) (Geobacter uraniireducens)).